A 422-amino-acid polypeptide reads, in one-letter code: UDP-N-acetylglucosamine 1-carboxyvinyltransferase (422 aa).

22-23 contacts phosphoenolpyruvate; that stretch reads KN. Arginine 93 is a binding site for UDP-N-acetyl-alpha-D-glucosamine. Cysteine 117 acts as the Proton donor in catalysis. Residue cysteine 117 is modified to 2-(S-cysteinyl)pyruvic acid O-phosphothioketal. Residues 122–126, aspartate 308, and leucine 330 contribute to the UDP-N-acetyl-alpha-D-glucosamine site; that span reads RPVDL.

This sequence belongs to the EPSP synthase family. MurA subfamily.

The protein resides in the cytoplasm. The catalysed reaction is phosphoenolpyruvate + UDP-N-acetyl-alpha-D-glucosamine = UDP-N-acetyl-3-O-(1-carboxyvinyl)-alpha-D-glucosamine + phosphate. Its pathway is cell wall biogenesis; peptidoglycan biosynthesis. In terms of biological role, cell wall formation. Adds enolpyruvyl to UDP-N-acetylglucosamine. The chain is UDP-N-acetylglucosamine 1-carboxyvinyltransferase from Helicobacter pylori (strain P12).